Here is a 35-residue protein sequence, read N- to C-terminus: Beta/delta-theraphotoxin-Pre1a (35 aa).

3 disulfides stabilise this stretch: Cys3-Cys18, Cys10-Cys23, and Cys17-Cys30.

It belongs to the neurotoxin 10 (Hwtx-1) family. In terms of tissue distribution, expressed by the venom gland.

It is found in the secreted. Gating-modifier toxin that both inhibits the peak current of human Nav1.1/SCN1A, rat Nav1.2/SCN2A, human Nav1.6/SCN8A, and human Nav1.7/SCN9A and concurrently inhibits fast inactivation of human Nav1.1 and rat Nav1.3/SCN3A. The relative rank order potency for Nav modulation is Nav1.3 (inactivation EC(50)=45 nM) &gt; Nav1.7 &gt; Nav1.2 &gt; Nav1.1 (inactivation) &gt; Nav1.1 &gt; Nav1.6 &gt; Nav1.3 (IC(50)=8 uM). The DII and DIV S3-S4 loops of Nav channel voltage sensors are important for the interaction of this toxin with Nav channels but cannot account for its unique subtype selectivity. It is the variability of the S1-S2 loops between NaV channels which contributes substantially to the selectivity profile observed for this toxin, particularly with regards to fast inactivation. This toxin may bind the channel in the resting state. In Psalmopoeus reduncus (Costa Rican orangemouth tarantula), this protein is Beta/delta-theraphotoxin-Pre1a.